The chain runs to 67 residues: COP9 signalosome complex subunit 9 homolog (67 aa).

Residues 1-31 form a disordered region; the sequence is MKPSLAADEMFSEGPGYMEMDESGGATGMMM.

It belongs to the CSN9 family. Probable component of the COP9 signalosome (CSN) complex.

Component of the COP9 signalosome complex (CSN), a complex involved in various cellular and developmental processes. The CSN complex is an essential regulator of the ubiquitin (Ubl) conjugation pathway by mediating the deneddylation of the cullin subunits of SCF-type E3 ligase complexes, leading to decrease the Ubl ligase activity. The chain is COP9 signalosome complex subunit 9 homolog from Drosophila melanogaster (Fruit fly).